The sequence spans 74 residues: Brevinin-2Ta (74 aa).

The signal sequence occupies residues 1–22 (MFTMKKSLLLFFFLGTISLSLC). A propeptide spanning residues 23-41 (QEERNADEDDGEMTEEEKR) is cleaved from the precursor. Cys68 and Cys74 are oxidised to a cystine.

The protein belongs to the frog skin active peptide (FSAP) family. Brevinin subfamily. Expressed by the skin glands.

The protein localises to the secreted. Its function is as follows. Antimicrobial peptide. The polypeptide is Brevinin-2Ta (Rana temporaria (European common frog)).